Consider the following 545-residue polypeptide: G-protein coupled receptor 161 (545 aa).

The Extracellular portion of the chain corresponds to methionine 1–glutamate 46. Residues asparagine 21 and asparagine 32 are each glycosylated (N-linked (GlcNAc...) asparagine). A helical membrane pass occupies residues phenylalanine 47–threonine 67. Over leucine 68 to lysine 80 the chain is Cytoplasmic. Residues phenylalanine 81–valine 101 form a helical membrane-spanning segment. Residues threonine 102–asparagine 117 lie on the Extracellular side of the membrane. Cysteine 116 and cysteine 194 form a disulfide bridge. N-linked (GlcNAc...) asparagine glycosylation occurs at asparagine 117. The helical transmembrane segment at phenylalanine 118–isoleucine 139 threads the bilayer. Residues aspartate 140 to arginine 159 are Cytoplasmic-facing. A helical transmembrane segment spans residues alanine 160 to phenylalanine 180. Topologically, residues glycine 181–threonine 205 are extracellular. A helical membrane pass occupies residues isoleucine 206 to phenylalanine 226. At isoleucine 227–leucine 285 the chain is on the cytoplasmic side. Residues isoleucine 286–isoleucine 306 traverse the membrane as a helical segment. At threonine 307–glutamate 322 the chain is on the extracellular side. The chain crosses the membrane as a helical span at residues threonine 323 to tryptophan 343. Residues asparagine 344–arginine 545 are Cytoplasmic-facing.

It belongs to the G-protein coupled receptor 1 family.

The protein resides in the cell projection. It is found in the cilium membrane. It localises to the cell membrane. In terms of biological role, key negative regulator of Shh signaling, which promotes the processing of GLI3 into GLI3R during neural tube development. Recruited by TULP3 and the IFT-A complex to primary cilia and acts as a regulator of the PKA-dependent basal repression machinery in Shh signaling by increasing cAMP levels, leading to promote the PKA-dependent processing of GLI3 into GLI3R and repress the Shh signaling. In presence of SHH, it is removed from primary cilia and is internalized into recycling endosomes, preventing its activity and allowing activation of the Shh signaling. Its ligand is unknown. This is G-protein coupled receptor 161 (Gpr161) from Mus musculus (Mouse).